Reading from the N-terminus, the 42-residue chain is Photosystem I reaction center subunit IX (42 aa).

A helical transmembrane segment spans residues 7 to 27 (YLSIAPVLATLWFGFLVGSLI).

The protein belongs to the PsaJ family.

Its subcellular location is the plastid membrane. Functionally, may help in the organization of the PsaE and PsaF subunits. This chain is Photosystem I reaction center subunit IX, found in Aneura mirabilis (Parasitic liverwort).